The chain runs to 361 residues: Aromatic amino acid aminotransferase (361 aa).

N6-(pyridoxal phosphate)lysine is present on lysine 221.

This sequence belongs to the class-II pyridoxal-phosphate-dependent aminotransferase family. In terms of assembly, homodimer. Pyridoxal 5'-phosphate is required as a cofactor.

It catalyses the reaction an aromatic L-alpha-amino acid + 2-oxoglutarate = an aromatic oxo-acid + L-glutamate. In terms of biological role, aminotransferase that catalyzes the conversion of aromatic amino acids and 2-oxoglutarate into corresponding aromatic oxo acids and L-glutamate. This Mycobacterium marinum (strain ATCC BAA-535 / M) protein is Aromatic amino acid aminotransferase.